We begin with the raw amino-acid sequence, 339 residues long: Exopolyphosphatase 1 (339 aa).

The segment at 315–339 (QTSVRDTRGQEVDRNAANRSRGDKT) is disordered. Residues 319–339 (RDTRGQEVDRNAANRSRGDKT) show a composition bias toward basic and acidic residues.

Belongs to the GppA/Ppx family. Homodimer.

It carries out the reaction [phosphate](n) + H2O = [phosphate](n-1) + phosphate + H(+). Functionally, degradation of inorganic polyphosphates (polyP). Releases orthophosphate processively from the ends of the polyP chain. The chain is Exopolyphosphatase 1 from Mycobacterium leprae (strain TN).